Consider the following 554-residue polypeptide: Raftlin (554 aa).

G2 is lipidated: N-myristoyl glycine. The S-palmitoyl cysteine moiety is linked to residue C3. Phosphoserine occurs at positions 183 and 199. 3 disordered regions span residues C192–G249, K441–S488, and G504–N554. 2 stretches are compositionally biased toward basic and acidic residues: residues S198 to E209 and Q475 to F487. A phosphoserine mark is found at S507 and S530. A compositionally biased stretch (basic and acidic residues) spans H526 to A542.

The protein belongs to the raftlin family. Interacts with TLR4; the interaction occurs in response to lipopolysaccharide stimulation. Interacts with CLTC; the interaction occurs in response to pathogens. Interacts with AP2A1 and AP2B1. Expressed in T-cells, B-cells, thymus and spleen (at protein level). Expressed in dendritic cells, macrophages, heart, lung and small intestine.

It is found in the cell membrane. The protein resides in the cytoplasm. It localises to the membrane raft. Its subcellular location is the endosome. The protein localises to the early endosome. Functionally, involved in protein trafficking via association with clathrin and AP2 complex. Upon bacterial lipopolysaccharide stimulation, mediates internalization of TLR4 to endosomes in dendritic cells and macrophages, and internalization of poly(I:C) to TLR3-positive endosomes in myeloid dendritic cells and epithelial cells; resulting in activation of TICAM1-mediated signaling and subsequent IFNB1 production. Involved in T-cell antigen receptor-mediated signaling by regulating tyrosine kinase LCK localization, T-cell dependent antibody production and cytokine secretion. May regulate B-cell antigen receptor-mediated signaling. May play a pivotal role in the formation and/or maintenance of lipid rafts. This chain is Raftlin (Rftn1), found in Mus musculus (Mouse).